Consider the following 1883-residue polypeptide: Endoribonuclease Dicer homolog 1 (1883 aa).

3 disordered regions span residues 71–97 (AESSPAPPPPPPPPLPEPVPVAPPELP), 129–188 (ARKE…DDRR), and 221–262 (RSGT…EKPV). Over residues 75–96 (PAPPPPPPPPLPEPVPVAPPEL) the composition is skewed to pro residues. Basic and acidic residues-rich tracts occupy residues 129–138 (ARKEPRRESH) and 228–262 (ESDREAKRARTQDGGSMEKKAEADRMGAAQREKPV). Residues 274-413 (VLEQAKSRNT…QEDCAIKIRN (140 aa)) enclose the Helicase ATP-binding domain. 287–294 (LETGAGKT) is a binding site for ATP. Residues 358 to 361 (DECH) carry the DECH box motif. The segment at 577–604 (KSETSDVEMQNTEKHNTNDLEEGELPDS) is disordered. The Helicase C-terminal domain occupies 629–789 (LIKILLKYQH…RTDLSHLDGT (161 aa)). The Dicer dsRNA-binding fold domain occupies 817 to 912 (AVGLIHFYCS…LPDRGSGEGE (96 aa)). The disordered stretch occupies residues 901–928 (TLLPDRGSGEGEKTEQNDEGEPLPGTAR). Basic and acidic residues predominate over residues 907–916 (GSGEGEKTEQ). The PAZ domain maps to 1163–1296 (HFSDYQNQGK…LPPELCLVHP (134 aa)). 2 RNase III domains span residues 1320-1498 (LAVQ…VAGG) and 1538-1686 (FDTL…LDSG). 3 residues coordinate Mg(2+): Glu1576, Asp1672, and Glu1675. DRBM domains lie at 1712–1775 (HPVR…VLKE) and 1797–1872 (FTRQ…LLNR).

The protein belongs to the helicase family. Dicer subfamily. May interact with ARGONAUTE1 or PINHEAD through their common PAZ domains. Mg(2+) serves as cofactor. Mn(2+) is required as a cofactor.

The protein resides in the nucleus. In terms of biological role, involved in the RNA silencing pathway. Cleaves double-stranded RNA to produce microRNAs (miRNAs) of 21-24 nucleotides which target the selective destruction of complementary RNAs. Regulates by this way the development of the plant. May not be involved in small interfering RNAs (siRNAs) production. This Oryza sativa subsp. japonica (Rice) protein is Endoribonuclease Dicer homolog 1 (DCL1).